Consider the following 301-residue polypeptide: Lipoyl synthase (301 aa).

Residues C37, C42, C48, C63, C67, C70, and S276 each contribute to the [4Fe-4S] cluster site. In terms of domain architecture, Radical SAM core spans 49–265 (WSKKHATVMI…ERIARTKGFL (217 aa)).

This sequence belongs to the radical SAM superfamily. Lipoyl synthase family. It depends on [4Fe-4S] cluster as a cofactor.

The protein localises to the cytoplasm. The enzyme catalyses [[Fe-S] cluster scaffold protein carrying a second [4Fe-4S](2+) cluster] + N(6)-octanoyl-L-lysyl-[protein] + 2 oxidized [2Fe-2S]-[ferredoxin] + 2 S-adenosyl-L-methionine + 4 H(+) = [[Fe-S] cluster scaffold protein] + N(6)-[(R)-dihydrolipoyl]-L-lysyl-[protein] + 4 Fe(3+) + 2 hydrogen sulfide + 2 5'-deoxyadenosine + 2 L-methionine + 2 reduced [2Fe-2S]-[ferredoxin]. It functions in the pathway protein modification; protein lipoylation via endogenous pathway; protein N(6)-(lipoyl)lysine from octanoyl-[acyl-carrier-protein]: step 2/2. Functionally, catalyzes the radical-mediated insertion of two sulfur atoms into the C-6 and C-8 positions of the octanoyl moiety bound to the lipoyl domains of lipoate-dependent enzymes, thereby converting the octanoylated domains into lipoylated derivatives. The protein is Lipoyl synthase of Rickettsia felis (strain ATCC VR-1525 / URRWXCal2) (Rickettsia azadi).